We begin with the raw amino-acid sequence, 580 residues long: Pescadillo homolog (580 aa).

Residues E291–A303 are compositionally biased toward acidic residues. The tract at residues E291–E321 is disordered. Over residues E312–E321 the composition is skewed to basic and acidic residues. Residues K323–P416 form the BRCT domain. Residues K448–G496 form a disordered region. Positions P452–E483 are enriched in acidic residues. Over residues D484 to K494 the composition is skewed to basic and acidic residues.

This sequence belongs to the pescadillo family. As to quaternary structure, component of the PeBoW complex, composed of bop1, pes1 and wdr12. The complex is held together by bop1, which interacts with pes1 via its N-terminal domain and with wdr12 via a high-affinity interaction between the seven-bladed beta-propeller domains of the 2 proteins. The PeBoW complex associates with the 66S pre-ribosome.

The protein localises to the nucleus. It is found in the nucleolus. Its subcellular location is the nucleoplasm. Component of the PeBoW complex, which is required for maturation of 28S and 5.8S ribosomal RNAs and formation of the 60S ribosome. The polypeptide is Pescadillo homolog (pes1) (Xenopus tropicalis (Western clawed frog)).